The following is a 342-amino-acid chain: Serine/threonine-protein kinase ISR1 (342 aa).

The 284-residue stretch at 59–342 (WRLTRVLGCG…SNARVAEHAF (284 aa)) folds into the Protein kinase domain. ATP is bound by residues 65–73 (LGCGSVACV) and lysine 84. Aspartate 190 (proton acceptor) is an active-site residue.

The protein belongs to the protein kinase superfamily. Ser/Thr protein kinase family.

It catalyses the reaction L-seryl-[protein] + ATP = O-phospho-L-seryl-[protein] + ADP + H(+). It carries out the reaction L-threonyl-[protein] + ATP = O-phospho-L-threonyl-[protein] + ADP + H(+). In terms of biological role, probable serine/threonine protein kinase which may function redundantly with MPK1-independent branch of the PCK1 pathway. The sequence is that of Serine/threonine-protein kinase ISR1 (ISR1) from Eremothecium gossypii (strain ATCC 10895 / CBS 109.51 / FGSC 9923 / NRRL Y-1056) (Yeast).